Here is a 510-residue protein sequence, read N- to C-terminus: MKIEKSQRNLEIDRSRKNDFLYPLIFREYIYTFAHDRDLNRSILLENVGYDNKYSLLIVKRLITRMYQQNHLIISANDSNQNTFFRYNKNLYFQMISEGFAVIVEIPFSLRLVSSLESSEIVKSHNLRSIHSIFPFLEGKFPHLNYLSEGLIPYPIHLEKLVQILRYWVKDPSSLHLLRLFLHEYWNLNSLIIPKKSISFFVKKNQRFFLFLYNSHVYEYESVFFFLCKQSFHFRLTFYQVFLERIYFYGKIEHFVEVFTKDWGDSLCLLKDPFIHYIRYQGKSIFVSKDTPLLMKKWKYYLVNLCQCHFDVCFQPQKIHINPFSLYKHSFALLGYLSSSSVRLNLSVVRSQMLENAFLMDNIMNKLDTTVSIIPLIGSLAKMKFCNAVGHPISKPTWADFSDSDIIDRFVRICRNLSHYYSGSSRKKSLYRIKYILRLSCVKTLARKHKSTVRIFLKRLGSELLEEFFTEEEQILFLIFPRASSISQKLYRGRVWYLDIICINELSNHE.

The protein belongs to the intron maturase 2 family. MatK subfamily.

The protein localises to the plastid. It localises to the chloroplast. In terms of biological role, usually encoded in the trnK tRNA gene intron. Probably assists in splicing its own and other chloroplast group II introns. The protein is Maturase K of Populus trichocarpa (Western balsam poplar).